The following is a 226-amino-acid chain: Leucyl/phenylalanyl-tRNA--protein transferase (226 aa).

The protein belongs to the L/F-transferase family.

The protein resides in the cytoplasm. It catalyses the reaction N-terminal L-lysyl-[protein] + L-leucyl-tRNA(Leu) = N-terminal L-leucyl-L-lysyl-[protein] + tRNA(Leu) + H(+). It carries out the reaction N-terminal L-arginyl-[protein] + L-leucyl-tRNA(Leu) = N-terminal L-leucyl-L-arginyl-[protein] + tRNA(Leu) + H(+). The enzyme catalyses L-phenylalanyl-tRNA(Phe) + an N-terminal L-alpha-aminoacyl-[protein] = an N-terminal L-phenylalanyl-L-alpha-aminoacyl-[protein] + tRNA(Phe). Functions in the N-end rule pathway of protein degradation where it conjugates Leu, Phe and, less efficiently, Met from aminoacyl-tRNAs to the N-termini of proteins containing an N-terminal arginine or lysine. The polypeptide is Leucyl/phenylalanyl-tRNA--protein transferase (Pseudomonas paraeruginosa (strain DSM 24068 / PA7) (Pseudomonas aeruginosa (strain PA7))).